We begin with the raw amino-acid sequence, 294 residues long: 4-hydroxy-tetrahydrodipicolinate synthase (294 aa).

Residue Thr48 participates in pyruvate binding. Catalysis depends on Tyr136, which acts as the Proton donor/acceptor. The active-site Schiff-base intermediate with substrate is the Lys164. Val206 contributes to the pyruvate binding site.

The protein belongs to the DapA family. As to quaternary structure, homotetramer; dimer of dimers.

It localises to the cytoplasm. It catalyses the reaction L-aspartate 4-semialdehyde + pyruvate = (2S,4S)-4-hydroxy-2,3,4,5-tetrahydrodipicolinate + H2O + H(+). It participates in amino-acid biosynthesis; L-lysine biosynthesis via DAP pathway; (S)-tetrahydrodipicolinate from L-aspartate: step 3/4. Its function is as follows. Catalyzes the condensation of (S)-aspartate-beta-semialdehyde [(S)-ASA] and pyruvate to 4-hydroxy-tetrahydrodipicolinate (HTPA). The chain is 4-hydroxy-tetrahydrodipicolinate synthase from Desulforudis audaxviator (strain MP104C).